The sequence spans 197 residues: Protein GrpE (197 aa).

A disordered region spans residues 1–41; that stretch reads MSSKEQKTPEGQAPEEIITEQHEEVEAVEPDASAEQVDPRD.

The protein belongs to the GrpE family. As to quaternary structure, homodimer.

The protein localises to the cytoplasm. In terms of biological role, participates actively in the response to hyperosmotic and heat shock by preventing the aggregation of stress-denatured proteins, in association with DnaK and GrpE. It is the nucleotide exchange factor for DnaK and may function as a thermosensor. Unfolded proteins bind initially to DnaJ; upon interaction with the DnaJ-bound protein, DnaK hydrolyzes its bound ATP, resulting in the formation of a stable complex. GrpE releases ADP from DnaK; ATP binding to DnaK triggers the release of the substrate protein, thus completing the reaction cycle. Several rounds of ATP-dependent interactions between DnaJ, DnaK and GrpE are required for fully efficient folding. The protein is Protein GrpE of Enterobacter sp. (strain 638).